Reading from the N-terminus, the 40-residue chain is Adenylate kinase (40 aa).

Residue 10–15 (GAGKGT) coordinates ATP. Positions 30–40 (STGDMFIKAIK) are NMP. T31 is a binding site for AMP.

It belongs to the adenylate kinase family. In terms of assembly, monomer.

It localises to the cytoplasm. It catalyses the reaction AMP + ATP = 2 ADP. It participates in purine metabolism; AMP biosynthesis via salvage pathway; AMP from ADP: step 1/1. Catalyzes the reversible transfer of the terminal phosphate group between ATP and AMP. Plays an important role in cellular energy homeostasis and in adenine nucleotide metabolism. The sequence is that of Adenylate kinase (adk) from Staphylococcus carnosus.